The chain runs to 253 residues: Probable transcriptional regulatory protein RAF_ORF0717 (253 aa).

Positions 1–21 (MAGHSKFKNIQHRKGAQDKKR) are disordered.

Belongs to the TACO1 family.

It localises to the cytoplasm. The sequence is that of Probable transcriptional regulatory protein RAF_ORF0717 from Rickettsia africae (strain ESF-5).